A 303-amino-acid chain; its full sequence is Probable cell division protein WhiA (303 aa).

A DNA-binding region (H-T-H motif) is located at residues 272 to 303 (SIQQIADSLETPLSKSGVNHRLRKINKIADEL).

Belongs to the WhiA family.

Its function is as follows. Involved in cell division and chromosome segregation. This Streptococcus agalactiae serotype Ia (strain ATCC 27591 / A909 / CDC SS700) protein is Probable cell division protein WhiA.